The primary structure comprises 500 residues: 7-alpha-hydroxycholest-4-en-3-one 12-alpha-hydroxylase (500 aa).

The chain crosses the membrane as a helical span at residues 4 to 24 (WCTVLGALLTVVGCLCLSLLL). Serine 325 carries the post-translational modification Phosphoserine. Cysteine 439 provides a ligand contact to heme.

It belongs to the cytochrome P450 family. Heme serves as cofactor. Expressed in liver.

It is found in the endoplasmic reticulum membrane. The protein localises to the microsome membrane. The catalysed reaction is 7alpha-hydroxycholest-4-en-3-one + reduced [NADPH--hemoprotein reductase] + O2 = 7alpha,12alpha-dihydroxycholest-4-en-3-one + oxidized [NADPH--hemoprotein reductase] + H2O + H(+). It carries out the reaction 5beta-cholestane-3alpha,7alpha-diol + reduced [NADPH--hemoprotein reductase] + O2 = 5beta-cholestane-3alpha,7alpha,12alpha-triol + oxidized [NADPH--hemoprotein reductase] + H2O + H(+). The enzyme catalyses chenodeoxycholate + reduced [NADPH--hemoprotein reductase] + O2 = cholate + oxidized [NADPH--hemoprotein reductase] + H2O + H(+). Its pathway is lipid metabolism; bile acid biosynthesis. Its function is as follows. A cytochrome P450 monooxygenase involved in primary bile acid biosynthesis. Catalyzes the 12alpha-hydroxylation of 7alpha-hydroxy-4-cholesten-3-one, an intermediate metabolite in cholic acid biosynthesis. Controls biliary balance of cholic acid and chenodeoxycholic acid, ultimately regulating the intestinal absorption of dietary lipids. Mechanistically, uses molecular oxygen inserting one oxygen atom into a substrate, and reducing the second into a water molecule, with two electrons provided by NADPH via cytochrome P450 reductase (CPR; NADPH--hemoprotein reductase). In Mus musculus (Mouse), this protein is 7-alpha-hydroxycholest-4-en-3-one 12-alpha-hydroxylase (Cyp8b1).